Consider the following 190-residue polypeptide: Holliday junction branch migration complex subunit RuvA (190 aa).

The interval 1-64 (MIGSLTGIIE…DNLTQLYGFL (64 aa)) is domain I. Positions 65-142 (DKQEQDYMRM…KMPIEETLII (78 aa)) are domain II. Position 143 (Lys-143) is a region of interest, flexible linker. The segment at 143-190 (KEDDSLAALISLGYDKLKAFNAIQEIKANFPDDSIQEIIRKALQKLSQ) is domain III.

This sequence belongs to the RuvA family. As to quaternary structure, homotetramer. Forms an RuvA(8)-RuvB(12)-Holliday junction (HJ) complex. HJ DNA is sandwiched between 2 RuvA tetramers; dsDNA enters through RuvA and exits via RuvB. An RuvB hexamer assembles on each DNA strand where it exits the tetramer. Each RuvB hexamer is contacted by two RuvA subunits (via domain III) on 2 adjacent RuvB subunits; this complex drives branch migration. In the full resolvosome a probable DNA-RuvA(4)-RuvB(12)-RuvC(2) complex forms which resolves the HJ.

The protein resides in the cytoplasm. Functionally, the RuvA-RuvB-RuvC complex processes Holliday junction (HJ) DNA during genetic recombination and DNA repair, while the RuvA-RuvB complex plays an important role in the rescue of blocked DNA replication forks via replication fork reversal (RFR). RuvA specifically binds to HJ cruciform DNA, conferring on it an open structure. The RuvB hexamer acts as an ATP-dependent pump, pulling dsDNA into and through the RuvAB complex. HJ branch migration allows RuvC to scan DNA until it finds its consensus sequence, where it cleaves and resolves the cruciform DNA. In Ehrlichia chaffeensis (strain ATCC CRL-10679 / Arkansas), this protein is Holliday junction branch migration complex subunit RuvA.